A 319-amino-acid chain; its full sequence is Transcription factor STKL2 (319 aa).

A disordered region spans residues 1–119 (MAPLESPATA…NKKANPQRVW (119 aa)). Over residues 21-34 (EIFKSSSEESKPKD) the composition is skewed to basic and acidic residues. Residues 38 to 55 (VPSSKTLKSPSAAVNSKT) are compositionally biased toward polar residues. The segment covering 89–112 (RAGEGSTSRDMHVKRVKKEDDNKK) has biased composition (basic and acidic residues).

The protein belongs to the GeBP family. In terms of tissue distribution, expressed strongly in leaves and flowers, weakly in roots, and very weakly in stems.

The protein resides in the nucleus. Functionally, transcription repressor that binds DNA in a sequence-specific manner, 5'-GCCT-3', to regulate the expression of PGR. Acts as a modulatory component for the glucose-triggered developmental leaf growth process. This Arabidopsis thaliana (Mouse-ear cress) protein is Transcription factor STKL2.